A 322-amino-acid chain; its full sequence is Alanine dehydrogenase (322 aa).

K65 (proton donor/acceptor) is an active-site residue. NAD(+) is bound by residues R108, 135–136 (TQ), 157–159 (DVR), 217–219 (GAD), K223, and S290.

The protein belongs to the ornithine cyclodeaminase/mu-crystallin family. Archaeal alanine dehydrogenase subfamily. As to quaternary structure, homodimer.

It catalyses the reaction L-alanine + NAD(+) + H2O = pyruvate + NH4(+) + NADH + H(+). Catalyzes the NAD(+)-dependent oxidative deamination of L-alanine to pyruvate, and the reverse reaction, the reductive amination of pyruvate. Its physiological role is not known. Cannot use NADP(+) instead of NAD(+) as a cosubstrate. In the deamination direction, can also efficiently use L-2-aminobutyrate as substrate. In the reductive amination direction, also exhibits high activity with 2-oxobutyrate and oxaloacetate as substrate. In contrast to bacterial homologs, does not exhibit any ornithine cyclodeaminase activity. This Archaeoglobus fulgidus (strain ATCC 49558 / DSM 4304 / JCM 9628 / NBRC 100126 / VC-16) protein is Alanine dehydrogenase.